A 208-amino-acid polypeptide reads, in one-letter code: Thymidylate kinase (208 aa).

Residue 10–17 (GPEGSGKS) coordinates ATP.

The protein belongs to the thymidylate kinase family.

The catalysed reaction is dTMP + ATP = dTDP + ADP. Its function is as follows. Phosphorylation of dTMP to form dTDP in both de novo and salvage pathways of dTTP synthesis. The polypeptide is Thymidylate kinase (Bacillus cytotoxicus (strain DSM 22905 / CIP 110041 / 391-98 / NVH 391-98)).